A 781-amino-acid polypeptide reads, in one-letter code: Catenin beta-1 (781 aa).

N-acetylalanine is present on alanine 2. The interval 2-23 is interaction with VCL; sequence ATQADLMELDMAMEPDRKAAVS. Serine 23 is modified (phosphoserine; by GSK3-beta; alternate). O-linked (GlcNAc) serine; alternate glycosylation occurs at serine 23. The residue at position 29 (serine 29) is a Phosphoserine; by GSK3-beta. Residues serine 33 and serine 37 each carry the phosphoserine; by GSK3-beta and HIPK2 modification. The disordered stretch occupies residues 34–57; that stretch reads GIHSGATTTAPSLSGKGNPEEEDV. Threonine 41 bears the Phosphothreonine; by GSK3-beta mark. Serine 45 bears the Phosphoserine mark. The residue at position 49 (lysine 49) is an N6-acetyllysine. At tyrosine 64 the chain carries Phosphotyrosine; by PTK6. Tyrosine 142 is subject to Phosphotyrosine; by FYN and PTK6. ARM repeat units lie at residues 151-191, 193-234, 235-276, 277-318, 319-360, 361-389, 400-441, 442-484, 489-530, 531-571, 594-636, and 637-666; these read RAIP…IMRS, QMVS…IFKS, GGIP…VRLA, GGLQ…ILAS, GGPQ…IVEA, GGMQALGLHLTDPSQRLVQNCLWTLRNLS, GLLG…VCQV, GGIE…AQNA, YGLP…LREQ, GAIP…EIVE, NTIP…AEGA, and TAPLTELLHSRNEGVATYAAAVLFRMSEDK. Residues 156-178 form an interaction with BCL9 region; that stretch reads LTKLLNDEDQVVVNKAAVMVHQL. Position 191 is a phosphoserine (serine 191). Serine 246 is modified (phosphoserine; by CDK5). Tyrosine 331 and tyrosine 333 each carry phosphotyrosine. Serine 552 bears the Phosphoserine; by AMPK mark. Phosphothreonine is present on threonine 556. Cysteine 619 carries the post-translational modification S-nitrosocysteine. A Phosphoserine modification is found at serine 675. Positions 720–781 are disordered; it reads HSGGYGQDAL…NQLAWFDTDL (62 aa). The span at 734–745 shows a compositional bias: basic and acidic residues; sequence MMEHEMGGHHPG. The segment at 772–781 is interaction with SCRIB; it reads NQLAWFDTDL.

Belongs to the beta-catenin family. As to quaternary structure, two separate complex-associated pools are found in the cytoplasm. The majority is present as component of an E-cadherin/ catenin adhesion complex composed of at least E-cadherin/CDH1 and beta-catenin/CTNNB1, and possibly alpha-catenin/CTNNA1; the complex is located to adherens junctions. The stable association of CTNNA1 is controversial as CTNNA1 was shown not to bind to F-actin when assembled in the complex. Alternatively, the CTNNA1-containing complex may be linked to F-actin by other proteins such as LIMA1. Binds NHERF1. Interacts with PTPRU (via the cytoplasmic juxtamembrane domain) and with EMD. Interacts with SESTD1 and TRPC4. Interacts with CAV1. Interacts with PTPRJ. Interacts with PKT7. Interacts with FAT1 (via the cytoplasmic domain). Interacts with CDK2, NDRG2 and NANOS1. Interacts with NEK2 and CDK5. Interacts with CARM1, CXADR, PCDH11Y and PTK6. Interacts with RAPGEF2. Interacts with SOX7; this interaction may lead to proteasomal degradation of active CTNNB1 and thus inhibition of Wnt/beta-catenin-stimulated transcription. Identified in a complex with HINT1 and MITF. Interacts with FHIT. Interacts with FERMT2. Identified in a complex with TCF4 and FERMT2. Another cytoplasmic pool is part of a large complex containing AXIN1, AXIN2, APC, CSNK1A1 and GSK3B that promotes phosphorylation on N-terminal Ser and Thr residues and ubiquitination of CTNNB1 via BTRC and its subsequent degradation by the proteasome. Wnt-dependent activation of DVL antagonizes the action of GSK3B. When GSK3B activity is inhibited the complex dissociates, CTNNB1 is dephosphorylated and is no longer targeted for destruction. The stabilized protein translocates to the nucleus, where it binds TCF/LEF-1 family members, BCL9, BCL9L and possibly also RUVBL1 and CHD8. Interacts with TAX1BP3 (via the PDZ domain); this interaction inhibits the transcriptional activity of CTNNB1. Interacts with AJAP1, BAIAP1 and CTNNA3. Interacts with TRPV4; the TRPV4 and CTNNB1 complex can interact with CDH1. Interacts with VCL. The CTNNB1 and TCF4 complex interacts with PML. Interacts with XIRP1. Binds CTNNBIP and EP300. CTNNB1 forms a ternary complex with LEF1 and EP300 that is disrupted by CTNNBIP1 binding. Interacts directly with AXIN1; the interaction is regulated by CDK2 phosphorylation of AXIN1. Interacts with GLIS2. Interacts with SCRIB. Interacts with TNIK and TCF7L2. Interacts with SLC30A9. Interacts with RORA. May interact with P-cadherin/CDH3. Interacts with RNF220. Interacts with CTNND2. Interacts (via the C-terminal region) with CBY1. The complex composed, at least, of APC, CTNNB1 and GSK3B interacts with JPT1; the interaction requires the inactive form of GSK3B (phosphorylated at 'Ser-9'). Interacts with DLG5. Interacts with FAM53B; promoting translocation to the nucleus. Interacts with TMEM170B. Interacts with AHI1. Interacts with GID8. Component of an cadherin:catenin adhesion complex composed of at least of CDH26, beta-catenin/CTNNB1, alpha-catenin/CTNNA1 and p120 catenin/CTNND1. Forms a complex comprising APPL1, RUVBL2, APPL2, HDAC1 and HDAC2. Interacts with IRF2BPL; mediates the ubiquitination and degradation of CTNNB1. Interacts with AMFR. Interacts with LMBR1L. Interacts with SOX30; prevents interaction of CTNNB1 with TCF7L2/TCF4 and leads to inhibition of Wnt signaling. Interacts with SOX9; inhibiting CTNNB1 activity by competing with the binding sites of TCF/LEF within CTNNB1, thereby inhibiting the Wnt signaling. Interacts with SPN/CD43 cytoplasmic tail. Interacts (when phosphorylated at Tyr-333) with isoform M2 of PKM (PKM2); promoting transcription activation. Interacts with PKP2 (via HEAD domain). Interacts with CDH1. Interacts (when unphosphorylated) with FLYWCH1, perhaps preventing interaction of CTNNB1 with TCF4, and thereby regulating transcription activation; phosphorylation of CTNNB1 may inhibit the interaction. Interacts (via the central armadillo domains) with probable transcriptional regulator ADNP (via N-terminal region); interaction is direct and stabilizes CTNNB1 by modulating its phosphorylation by glycogen synthase kinase-3 beta GSK3B. Interacts with NR5A2. Interacts with DSG2; the interaction promotes localization of CTNNB1 at cell junctions thus reducing its nuclear localization and subsequent transcription of CTNNB1/TCF-target genes. Post-translationally, phosphorylation at Ser-552 by AMPK promotes stabilization of the protein, enhancing TCF/LEF-mediated transcription. Phosphorylation by GSK3B requires prior phosphorylation of Ser-45 by another kinase. Phosphorylation proceeds then from Thr-41 to Ser-37 and Ser-33. Phosphorylated by NEK2. EGF stimulates tyrosine phosphorylation. Phosphorylated on Ser-33 and Ser-37 by HIPK2 and GSK3B, this phosphorylation triggers proteasomal degradation. Phosphorylation on Ser-191 and Ser-246 by CDK5. Phosphorylation by CDK2 regulates insulin internalization. Phosphorylation by PTK6 at Tyr-64, Tyr-142, Tyr-331 and/or Tyr-333 with the predominant site at Tyr-64 is not essential for inhibition of transcriptional activity. Phosphorylation by SRC at Tyr-333 promotes interaction with isoform M2 of PKM (PKM2); promoting transcription activation. In terms of processing, ubiquitinated by the SCF(BTRC) E3 ligase complex when phosphorylated by GSK3B, leading to its degradation. Ubiquitinated by a E3 ubiquitin ligase complex containing UBE2D1, SIAH1, CACYBP/SIP, SKP1, APC and TBL1X, leading to its subsequent proteasomal degradation. Ubiquitinated and degraded following interaction with SOX9. Ubiquitinated via 'Lys-11'- and 'Lys-29'-linked ubiquitin chains by UBR5, leading to its stabilization. S-nitrosylation at Cys-619 within adherens junctions promotes VEGF-induced, NO-dependent endothelial cell permeability by disrupting interaction with E-cadherin, thus mediating disassembly adherens junctions. Post-translationally, O-glycosylation at Ser-23 decreases nuclear localization and transcriptional activity, and increases localization to the plasma membrane and interaction with E-cadherin CDH1. In terms of processing, deacetylated at Lys-49 by SIRT1. In terms of tissue distribution, expressed in cerebellar granule neurons (at protein level). Expressed in the intestinal epithelium (at protein level). Abundantly expressed in the tooth, skin, lung, kidney, eye and brain with weak expression in the liver and heart.

Its subcellular location is the cytoplasm. The protein localises to the nucleus. It localises to the cytoskeleton. The protein resides in the cell junction. It is found in the adherens junction. Its subcellular location is the cell membrane. The protein localises to the microtubule organizing center. It localises to the centrosome. The protein resides in the spindle pole. It is found in the synapse. Its subcellular location is the cilium basal body. In terms of biological role, key downstream component of the canonical Wnt signaling pathway. In the absence of Wnt, forms a complex with AXIN1, AXIN2, APC, CSNK1A1 and GSK3B that promotes phosphorylation on N-terminal Ser and Thr residues and ubiquitination of CTNNB1 via BTRC and its subsequent degradation by the proteasome. In the presence of Wnt ligand, CTNNB1 is not ubiquitinated and accumulates in the nucleus, where it acts as a coactivator for transcription factors of the TCF/LEF family, leading to activate Wnt responsive genes. Also acts as a coactivator for other transcription factors, such as NR5A2. Promotes epithelial to mesenchymal transition/mesenchymal to epithelial transition (EMT/MET) via driving transcription of CTNNB1/TCF-target genes. Involved in the regulation of cell adhesion, as component of an E-cadherin:catenin adhesion complex. Acts as a negative regulator of centrosome cohesion. Involved in the CDK2/PTPN6/CTNNB1/CEACAM1 pathway of insulin internalization. Blocks anoikis of malignant kidney and intestinal epithelial cells and promotes their anchorage-independent growth by down-regulating DAPK2. Disrupts PML function and PML-NB formation by inhibiting RANBP2-mediated sumoylation of PML. Promotes neurogenesis by maintaining sympathetic neuroblasts within the cell cycle. Involved in chondrocyte differentiation via interaction with SOX9: SOX9-binding competes with the binding sites of TCF/LEF within CTNNB1, thereby inhibiting the Wnt signaling. Acts as a positive regulator of odontoblast differentiation during mesenchymal tooth germ formation, via promoting the transcription of differentiation factors such as LEF1, BMP2 and BMP4. Activity is repressed in a MSX1-mediated manner at the bell stage of mesenchymal tooth germ formation which prevents premature differentiation of odontoblasts. The protein is Catenin beta-1 of Mus musculus (Mouse).